The chain runs to 554 residues: Potassium-transporting ATPase potassium-binding subunit (554 aa).

Transmembrane regions (helical) follow at residues 1-21 (MSSQ…LALA), 59-79 (WPAY…FLYL), 131-151 (GLAV…VALV), 174-194 (VRIL…AGAI), 246-266 (PNPL…FALT), 279-299 (GYAI…LMMW), 323-343 (FGIA…TGAV), 352-372 (GFGG…PGGV), 375-395 (GLYG…LMVG), 412-432 (FAAC…AVAM), 481-501 (IGIA…ALAG), and 525-545 (GLLV…ALAL).

Belongs to the KdpA family. As to quaternary structure, the system is composed of three essential subunits: KdpA, KdpB and KdpC.

The protein localises to the cell membrane. Part of the high-affinity ATP-driven potassium transport (or Kdp) system, which catalyzes the hydrolysis of ATP coupled with the electrogenic transport of potassium into the cytoplasm. This subunit binds the extracellular potassium ions and delivers the ions to the membrane domain of KdpB through an intramembrane tunnel. The protein is Potassium-transporting ATPase potassium-binding subunit of Streptomyces griseus subsp. griseus (strain JCM 4626 / CBS 651.72 / NBRC 13350 / KCC S-0626 / ISP 5235).